A 286-amino-acid polypeptide reads, in one-letter code: NAD kinase (286 aa).

Catalysis depends on Asp74, which acts as the Proton acceptor. Residues 74–75 (DG), 148–149 (ND), Asp178, Ala186, 189–194 (TAYNLS), and Gln244 contribute to the NAD(+) site.

This sequence belongs to the NAD kinase family. Requires a divalent metal cation as cofactor.

It localises to the cytoplasm. It catalyses the reaction NAD(+) + ATP = ADP + NADP(+) + H(+). Involved in the regulation of the intracellular balance of NAD and NADP, and is a key enzyme in the biosynthesis of NADP. Catalyzes specifically the phosphorylation on 2'-hydroxyl of the adenosine moiety of NAD to yield NADP. In Campylobacter jejuni subsp. jejuni serotype O:6 (strain 81116 / NCTC 11828), this protein is NAD kinase.